The chain runs to 100 residues: MIGLNHYLIVSGLLFCIGLAGMLKRKNILLLFFSTEIMLNAINIGFVAISKYTHNLDGQMFALFIIAIAASEVAIGLGLVILWFKKYKSLDIDSLNAMKG.

A run of 3 helical transmembrane segments spans residues M1 to G21, I28 to A48, and F64 to F84.

The protein belongs to the complex I subunit 4L family. As to quaternary structure, NDH-1 is composed of 14 different subunits. Subunits NuoA, H, J, K, L, M, N constitute the membrane sector of the complex.

The protein localises to the cell inner membrane. It catalyses the reaction a quinone + NADH + 5 H(+)(in) = a quinol + NAD(+) + 4 H(+)(out). NDH-1 shuttles electrons from NADH, via FMN and iron-sulfur (Fe-S) centers, to quinones in the respiratory chain. The immediate electron acceptor for the enzyme in this species is believed to be ubiquinone. Couples the redox reaction to proton translocation (for every two electrons transferred, four hydrogen ions are translocated across the cytoplasmic membrane), and thus conserves the redox energy in a proton gradient. This Helicobacter pylori (strain P12) protein is NADH-quinone oxidoreductase subunit K.